A 146-amino-acid chain; its full sequence is Leptin (146 aa).

An intrachain disulfide couples Cys-96 to Cys-146.

Belongs to the leptin family.

It localises to the secreted. Its function is as follows. Key player in the regulation of energy balance and body weight control. Once released into the circulation, has central and peripheral effects by binding LEPR, found in many tissues, which results in the activation of several major signaling pathways. In the hypothalamus, acts as an appetite-regulating factor that induces a decrease in food intake and an increase in energy consumption by inducing anorexinogenic factors and suppressing orexigenic neuropeptides, also regulates bone mass and secretion of hypothalamo-pituitary-adrenal hormones. In the periphery, increases basal metabolism, influences reproductive function, regulates pancreatic beta-cell function and insulin secretion, is pro-angiogenic for endothelial cell and affects innate and adaptive immunity. In the arcuate nucleus of the hypothalamus, activates by depolarization POMC neurons inducing FOS and SOCS3 expression to release anorexigenic peptides and inhibits by hyperpolarization NPY neurons inducing SOCS3 with a consequent reduction on release of orexigenic peptides. In addition to its known satiety inducing effect, has a modulatory role in nutrient absorption. In the intestine, reduces glucose absorption by enterocytes by activating PKC and leading to a sequential activation of p38, PI3K and ERK signaling pathways which exerts an inhibitory effect on glucose absorption. Acts as a growth factor on certain tissues, through the activation of different signaling pathways increases expression of genes involved in cell cycle regulation such as CCND1, via JAK2-STAT3 pathway, or VEGFA, via MAPK1/3 and PI3K-AKT1 pathways. May also play an apoptotic role via JAK2-STAT3 pathway and up-regulation of BIRC5 expression. Pro-angiogenic, has mitogenic activity on vascular endothelial cells and plays a role in matrix remodeling by regulating the expression of matrix metalloproteinases (MMPs) and tissue inhibitors of metalloproteinases (TIMPs). In innate immunity, modulates the activity and function of neutrophils by increasing chemotaxis and the secretion of oxygen radicals. Increases phagocytosis by macrophages and enhances secretion of pro-inflammatory mediators. Increases cytotoxic ability of NK cells. Plays a pro-inflammatory role, in synergy with IL1B, by inducing NOS2 which promotes the production of IL6, IL8 and Prostaglandin E2, through a signaling pathway that involves JAK2, PI3K, MAP2K1/MEK1 and MAPK14/p38. In adaptive immunity, promotes the switch of memory T-cells towards T helper-1 cell immune responses. Increases CD4(+)CD25(-) T-cell proliferation and reduces autophagy during TCR (T-cell receptor) stimulation, through MTOR signaling pathway activation and BCL2 up-regulation. This chain is Leptin (LEP), found in Ovis aries (Sheep).